Reading from the N-terminus, the 100-residue chain is Aspartyl/glutamyl-tRNA(Asn/Gln) amidotransferase subunit C (100 aa).

Belongs to the GatC family. In terms of assembly, heterotrimer of A, B and C subunits.

The catalysed reaction is L-glutamyl-tRNA(Gln) + L-glutamine + ATP + H2O = L-glutaminyl-tRNA(Gln) + L-glutamate + ADP + phosphate + H(+). The enzyme catalyses L-aspartyl-tRNA(Asn) + L-glutamine + ATP + H2O = L-asparaginyl-tRNA(Asn) + L-glutamate + ADP + phosphate + 2 H(+). In terms of biological role, allows the formation of correctly charged Asn-tRNA(Asn) or Gln-tRNA(Gln) through the transamidation of misacylated Asp-tRNA(Asn) or Glu-tRNA(Gln) in organisms which lack either or both of asparaginyl-tRNA or glutaminyl-tRNA synthetases. The reaction takes place in the presence of glutamine and ATP through an activated phospho-Asp-tRNA(Asn) or phospho-Glu-tRNA(Gln). The sequence is that of Aspartyl/glutamyl-tRNA(Asn/Gln) amidotransferase subunit C from Dictyoglomus thermophilum (strain ATCC 35947 / DSM 3960 / H-6-12).